Consider the following 390-residue polypeptide: Magnesium-protoporphyrin IX monomethyl ester [oxidative] cyclase (390 aa).

This sequence belongs to the AcsF family. Fe cation serves as cofactor.

It carries out the reaction Mg-protoporphyrin IX 13-monomethyl ester + 3 NADPH + 3 O2 + 2 H(+) = 3,8-divinyl protochlorophyllide a + 3 NADP(+) + 5 H2O. It functions in the pathway porphyrin-containing compound metabolism; chlorophyll biosynthesis (light-independent). In terms of biological role, catalyzes the formation of the isocyclic ring in chlorophyll biosynthesis. Mediates the cyclase reaction, which results in the formation of divinylprotochlorophyllide (Pchlide) characteristic of all chlorophylls from magnesium-protoporphyrin IX 13-monomethyl ester (MgPMME). The protein is Magnesium-protoporphyrin IX monomethyl ester [oxidative] cyclase of Prochlorococcus marinus (strain AS9601).